A 307-amino-acid polypeptide reads, in one-letter code: Holliday junction branch migration complex subunit RuvB (307 aa).

The tract at residues 1–167 (MKLQIKPPNT…FGVILNINYY (167 aa)) is large ATPase domain (RuvB-L). Residues Ile5, Gly48, Lys51, Thr52, Thr53, Arg157, Tyr167, and Arg204 each coordinate ATP. Thr52 provides a ligand contact to Mg(2+). Residues 168 to 233 (SNAEIEKMVS…DLEGLFKNLM (66 aa)) form a small ATPAse domain (RuvB-S) region. The segment at 236–307 (KNGLQSIDVQ…NSGREYLVNF (72 aa)) is head domain (RuvB-H). Arg270, Lys289, and Arg294 together coordinate DNA.

It belongs to the RuvB family. Homohexamer. Forms an RuvA(8)-RuvB(12)-Holliday junction (HJ) complex. HJ DNA is sandwiched between 2 RuvA tetramers; dsDNA enters through RuvA and exits via RuvB. An RuvB hexamer assembles on each DNA strand where it exits the tetramer. Each RuvB hexamer is contacted by two RuvA subunits (via domain III) on 2 adjacent RuvB subunits; this complex drives branch migration. In the full resolvosome a probable DNA-RuvA(4)-RuvB(12)-RuvC(2) complex forms which resolves the HJ.

It localises to the cytoplasm. The catalysed reaction is ATP + H2O = ADP + phosphate + H(+). In terms of biological role, the RuvA-RuvB-RuvC complex processes Holliday junction (HJ) DNA during genetic recombination and DNA repair, while the RuvA-RuvB complex plays an important role in the rescue of blocked DNA replication forks via replication fork reversal (RFR). RuvA specifically binds to HJ cruciform DNA, conferring on it an open structure. The RuvB hexamer acts as an ATP-dependent pump, pulling dsDNA into and through the RuvAB complex. RuvB forms 2 homohexamers on either side of HJ DNA bound by 1 or 2 RuvA tetramers; 4 subunits per hexamer contact DNA at a time. Coordinated motions by a converter formed by DNA-disengaged RuvB subunits stimulates ATP hydrolysis and nucleotide exchange. Immobilization of the converter enables RuvB to convert the ATP-contained energy into a lever motion, pulling 2 nucleotides of DNA out of the RuvA tetramer per ATP hydrolyzed, thus driving DNA branch migration. The RuvB motors rotate together with the DNA substrate, which together with the progressing nucleotide cycle form the mechanistic basis for DNA recombination by continuous HJ branch migration. Branch migration allows RuvC to scan DNA until it finds its consensus sequence, where it cleaves and resolves cruciform DNA. The sequence is that of Holliday junction branch migration complex subunit RuvB from Mycoplasma genitalium (strain ATCC 33530 / DSM 19775 / NCTC 10195 / G37) (Mycoplasmoides genitalium).